The following is a 314-amino-acid chain: DNA-directed RNA polymerase subunit alpha (314 aa).

Positions 1 to 228 are alpha N-terminal domain (alpha-NTD); sequence MIEIEKPRIE…EHLNIFVSLT (228 aa). The tract at residues 245–314 is alpha C-terminal domain (alpha-CTD); the sequence is KEKVLEMSIE…DLGLGLRKED (70 aa).

It belongs to the RNA polymerase alpha chain family. As to quaternary structure, homodimer. The RNAP catalytic core consists of 2 alpha, 1 beta, 1 beta' and 1 omega subunit. When a sigma factor is associated with the core the holoenzyme is formed, which can initiate transcription.

The enzyme catalyses RNA(n) + a ribonucleoside 5'-triphosphate = RNA(n+1) + diphosphate. Its function is as follows. DNA-dependent RNA polymerase catalyzes the transcription of DNA into RNA using the four ribonucleoside triphosphates as substrates. The chain is DNA-directed RNA polymerase subunit alpha from Staphylococcus epidermidis (strain ATCC 35984 / DSM 28319 / BCRC 17069 / CCUG 31568 / BM 3577 / RP62A).